Reading from the N-terminus, the 372-residue chain is Protein RecA (372 aa).

ATP is bound at residue 66–73; sequence GPESSGKT. Positions 328 to 359 are disordered; the sequence is GVGVRPEEPTATESGPDAATAESAPAVPAPAT. Positions 345–359 are enriched in low complexity; that stretch reads AATAESAPAVPAPAT.

The protein belongs to the RecA family.

It is found in the cytoplasm. In terms of biological role, can catalyze the hydrolysis of ATP in the presence of single-stranded DNA, the ATP-dependent uptake of single-stranded DNA by duplex DNA, and the ATP-dependent hybridization of homologous single-stranded DNAs. It interacts with LexA causing its activation and leading to its autocatalytic cleavage. This is Protein RecA from Streptomyces ambofaciens.